The primary structure comprises 342 residues: SWR1-complex protein 5 (342 aa).

3 disordered regions span residues 1–126, 142–178, and 214–238; these read MAPT…PVTI, PRTS…DPDS, and LGEN…RMPR. Acidic residues-rich tracts occupy residues 8–20 and 33–43; these read LAED…DSDF and ISDDDDEEAGE. A compositionally biased stretch (basic residues) spans 78–87; the sequence is GEKRQKKTKT. The BCNT-C domain maps to 260 to 341; sequence NLSMASRLQA…RRARMAQAGK (82 aa).

Belongs to the SWC5 family. In terms of assembly, component of the SWR1 chromatin remodeling complex.

The protein localises to the nucleus. Component of the SWR1 complex which mediates the ATP-dependent exchange of histone H2A for the H2A variant H2A.Z leading to transcriptional regulation of selected genes by chromatin remodeling. Involved in chromosome stability. The chain is SWR1-complex protein 5 (crc-2) from Neurospora crassa (strain ATCC 24698 / 74-OR23-1A / CBS 708.71 / DSM 1257 / FGSC 987).